The chain runs to 187 residues: Calmodulin-like protein 30 (187 aa).

Residues 21 to 47 (KPSRMFSRDRQSSGLSSPGPGGFSQPS) form a disordered region. Residues 32 to 47 (SSGLSSPGPGGFSQPS) are compositionally biased toward low complexity. EF-hand domains lie at 46–81 (PSVN…LGQE), 82–117 (RAIE…SGGI), 129–152 (FDLN…LGER), and 153–187 (CSLE…SNNV). 18 residues coordinate Ca(2+): D59, D61, D63, K65, E70, D95, D97, D99, E106, D130, N132, D134, K136, E141, D166, D168, D170, and E177.

This sequence belongs to the calmodulin family.

Potential calcium sensor. This chain is Calmodulin-like protein 30, found in Arabidopsis thaliana (Mouse-ear cress).